A 571-amino-acid polypeptide reads, in one-letter code: Membrane protein insertase YidC (571 aa).

Residues 4–24 (TRVFLIFAWLMVAVLLWMEWS) form a helical membrane-spanning segment. The tract at residues 29–76 (APTPAPTTTSAPAAAQSVPGATPGSVPNAQVPGAPGQAAVQAQASATP) is disordered. Composition is skewed to low complexity over residues 34–43 (PTTTSAPAAA) and 57–76 (AQVP…SATP). Helical transmembrane passes span 369-389 (LVGN…LVLY), 440-460 (GGCL…WVLV), 483-503 (YFIL…LTPA), and 518-538 (PLVF…YWVV).

This sequence belongs to the OXA1/ALB3/YidC family. Type 1 subfamily. Interacts with the Sec translocase complex via SecD. Specifically interacts with transmembrane segments of nascent integral membrane proteins during membrane integration.

It is found in the cell inner membrane. Functionally, required for the insertion and/or proper folding and/or complex formation of integral membrane proteins into the membrane. Involved in integration of membrane proteins that insert both dependently and independently of the Sec translocase complex, as well as at least some lipoproteins. Aids folding of multispanning membrane proteins. The sequence is that of Membrane protein insertase YidC from Stenotrophomonas maltophilia (strain R551-3).